Consider the following 170-residue polypeptide: MAAPVMSALGRLQGLIRTERSLLTHVQSRCIQTTSVCLKNRAARVRVGKGDKPVTYEAAHPPHYIAHRKGWLSQHTGNLDGEGGAAERTIEDVFIRRFIFGTFHGCLANEIVIKRRANLLIICAIFIRKMPTQKFYFLIGYTETLLSFLYKCPVKLEVQTVEEKVIYKYL.

The transit peptide at M1–C30 directs the protein to the mitochondrion.

The protein belongs to the universal ribosomal protein uS3 family. Component of the mitochondrial ribosome small subunit (28S) which comprises a 12S rRNA and about 30 distinct proteins.

It is found in the mitochondrion. This Xenopus laevis (African clawed frog) protein is Small ribosomal subunit protein uS3mA (mrps24-a).